Consider the following 246-residue polypeptide: 1-(5-phosphoribosyl)-5-[(5-phosphoribosylamino)methylideneamino] imidazole-4-carboxamide isomerase (246 aa).

Aspartate 8 (proton acceptor) is an active-site residue. Aspartate 131 acts as the Proton donor in catalysis.

This sequence belongs to the HisA/HisF family.

Its subcellular location is the cytoplasm. It catalyses the reaction 1-(5-phospho-beta-D-ribosyl)-5-[(5-phospho-beta-D-ribosylamino)methylideneamino]imidazole-4-carboxamide = 5-[(5-phospho-1-deoxy-D-ribulos-1-ylimino)methylamino]-1-(5-phospho-beta-D-ribosyl)imidazole-4-carboxamide. It functions in the pathway amino-acid biosynthesis; L-histidine biosynthesis; L-histidine from 5-phospho-alpha-D-ribose 1-diphosphate: step 4/9. The sequence is that of 1-(5-phosphoribosyl)-5-[(5-phosphoribosylamino)methylideneamino] imidazole-4-carboxamide isomerase from Bordetella bronchiseptica (strain ATCC BAA-588 / NCTC 13252 / RB50) (Alcaligenes bronchisepticus).